Reading from the N-terminus, the 34-residue chain is Egg-releasing peptide (34 aa).

The chain is Egg-releasing peptide from Aplysia californica (California sea hare).